Here is a 73-residue protein sequence, read N- to C-terminus: UPF0337 protein lp_1708 (73 aa).

Basic and acidic residues-rich tracts occupy residues 1–35 (MSDV…REAQ) and 44–73 (KAKD…KSDD). The segment at 1-73 (MSDVNKKFDS…KDKMKKKSDD (73 aa)) is disordered.

This sequence belongs to the UPF0337 (CsbD) family.

This is UPF0337 protein lp_1708 from Lactiplantibacillus plantarum (strain ATCC BAA-793 / NCIMB 8826 / WCFS1) (Lactobacillus plantarum).